Here is a 71-residue protein sequence, read N- to C-terminus: Large ribosomal subunit protein bL31 (71 aa).

Zn(2+)-binding residues include cysteine 16, cysteine 18, cysteine 38, and cysteine 41.

This sequence belongs to the bacterial ribosomal protein bL31 family. Type A subfamily. In terms of assembly, part of the 50S ribosomal subunit. Zn(2+) is required as a cofactor.

Its function is as follows. Binds the 23S rRNA. This chain is Large ribosomal subunit protein bL31, found in Francisella tularensis subsp. mediasiatica (strain FSC147).